A 634-amino-acid polypeptide reads, in one-letter code: Probable potassium transport system protein Kup 1 (634 aa).

The next 12 membrane-spanning stretches (helical) occupy residues 20–40 (FLTL…TSPL), 64–84 (VMSL…VLLI), 110–130 (FAAI…DAII), 148–168 (PVFD…LFVV), 176–196 (VAAW…LGGI), 224–244 (AGLL…ALYA), 256–276 (FAWF…QGAM), 290–310 (FLFP…ATII), 348–368 (IYIP…VFAF), 377–397 (AYGI…YFVM), 405–425 (VATS…FLMA), and 430–450 (IFEG…VMIT).

It belongs to the HAK/KUP transporter (TC 2.A.72) family.

The protein resides in the cell inner membrane. It catalyses the reaction K(+)(in) + H(+)(in) = K(+)(out) + H(+)(out). Transport of potassium into the cell. Likely operates as a K(+):H(+) symporter. The polypeptide is Probable potassium transport system protein Kup 1 (Rhodopseudomonas palustris (strain BisB5)).